We begin with the raw amino-acid sequence, 189 residues long: Interferon alpha-17 (189 aa).

Residues 1 to 23 form the signal peptide; the sequence is MALSFSLLMAVLVLSYKSICSLG. 2 disulfides stabilise this stretch: Cys-24/Cys-122 and Cys-52/Cys-162.

It belongs to the alpha/beta interferon family.

It localises to the secreted. Its function is as follows. Produced by macrophages, IFN-alpha have antiviral activities. Interferon stimulates the production of two enzymes: a protein kinase and an oligoadenylate synthetase. This chain is Interferon alpha-17 (IFNA17), found in Homo sapiens (Human).